The following is a 190-amino-acid chain: Myosin, light chain 1, alkali; skeletal, fast (190 aa).

Residues 1-17 (MAPKKDAKKPEPPKKAE) are compositionally biased toward basic and acidic residues. Positions 1–33 (MAPKKDAKKPEPPKKAEPAPAPAPAPEPPKADA) are disordered. Over residues 19 to 28 (APAPAPAPEP) the composition is skewed to pro residues. 2 EF-hand domains span residues 46-81 (DQMEDYREAFLLFDRVGDSKVAYNQIADIMRALGQN) and 123-158 (ATYDDYVEGLRVFDKEGNGTVMGAELRIVLSTLGEK).

In terms of assembly, myosin is a hexamer of 2 heavy chains and 4 light chains. Does not bind calcium. As to expression, expressed in fast muscle fibers during skeletal muscle differentiation.

Non-regulatory myosin light chain required for proper formation and/or maintenance of myofibers, and thus appropriate muscle function. The chain is Myosin, light chain 1, alkali; skeletal, fast from Danio rerio (Zebrafish).